Reading from the N-terminus, the 253-residue chain is Fatty acid elongase 5 (253 aa).

7 helical membrane-spanning segments follow: residues 24 to 44 (IFVSWSVLVGAHVGYIVLVII), 60 to 80 (IMMIYNVTQIYISAIMAISLA), 100 to 120 (FWIFVHYCSKFLDMFDTVLMI), 127 to 147 (QLSFLHIYHHATIGFIWGLLL), 150 to 170 (GIGNGTAFFGAWVNSAVHFLM), 188 to 208 (ILTKIQMFQFFLCIVQASLAP), and 214 to 234 (FALQWSFLQLTYHITLFILFL). Positions 132 to 136 (HIYHH) match the HxxHH motif motif. Histidine 135 (nucleophile) is an active-site residue.

The protein belongs to the ELO family.

The protein resides in the membrane. It carries out the reaction an acyl-CoA + malonyl-CoA + H(+) = a 3-oxoacyl-CoA + CO2 + CoA. It functions in the pathway lipid metabolism; polyunsaturated fatty acid biosynthesis. Functionally, involved in the synthesis of fatty acids. Elongates C20 polyunsaturated fatty acids (PUFAs) with a preference for n-6 PUFAs. This chain is Fatty acid elongase 5, found in Trypanosoma cruzi (strain CL Brener).